The following is a 567-amino-acid chain: Diphtheria toxin (567 aa).

An N-terminal signal peptide occupies residues 1–32 (MLVRGYVVSRKLFASILIGALLGIGAPPSAHA). His53 and Tyr97 together coordinate NAD(+). The active site involves Glu180. 2 cysteine pairs are disulfide-bonded: Cys218–Cys233 and Cys493–Cys503.

As to quaternary structure, homodimer. In terms of processing, proteolytic activation by host furin cleaves the protein in two parts, Diphtheria toxin fragment A and Diphtheria toxin fragment B; which remain associated via a disulfide bond.

The enzyme catalyses diphthamide-[translation elongation factor 2] + NAD(+) = N-(ADP-D-ribosyl)diphthamide-[translation elongation factor 2] + nicotinamide + H(+). Its activity is regulated as follows. Partially inhibited by 1,8-naphthalimide (NAP). Diphtheria toxin, produced by a phage infecting Corynebacterium diphtheriae, is a proenzyme that, after activation, catalyzes the covalent attachment of the ADP ribose moiety of NAD to eukaryotic elongation factor 2 (eEF-2). Fragment A is the catalytic portion responsible for enzymatic ADP-ribosylation of elongation factor 2, while fragment B is responsible for binding of toxin to cell receptors and entry of fragment A. The sequence is that of Diphtheria toxin from Corynebacterium diphtheriae.